Consider the following 311-residue polypeptide: Aspartate carbamoyltransferase catalytic subunit (311 aa).

Carbamoyl phosphate is bound by residues R55 and T56. K85 serves as a coordination point for L-aspartate. Residues R106, H135, and Q138 each coordinate carbamoyl phosphate. L-aspartate is bound by residues R168 and R230. Positions 268 and 269 each coordinate carbamoyl phosphate.

This sequence belongs to the aspartate/ornithine carbamoyltransferase superfamily. ATCase family. As to quaternary structure, heterododecamer (2C3:3R2) of six catalytic PyrB chains organized as two trimers (C3), and six regulatory PyrI chains organized as three dimers (R2).

It carries out the reaction carbamoyl phosphate + L-aspartate = N-carbamoyl-L-aspartate + phosphate + H(+). It functions in the pathway pyrimidine metabolism; UMP biosynthesis via de novo pathway; (S)-dihydroorotate from bicarbonate: step 2/3. Catalyzes the condensation of carbamoyl phosphate and aspartate to form carbamoyl aspartate and inorganic phosphate, the committed step in the de novo pyrimidine nucleotide biosynthesis pathway. The sequence is that of Aspartate carbamoyltransferase catalytic subunit from Salmonella paratyphi C (strain RKS4594).